Reading from the N-terminus, the 864-residue chain is Sine oculis-binding protein homolog (864 aa).

Positions 1–14 (MAEMEKEGRPPENK) are enriched in basic and acidic residues. The tract at residues 1–25 (MAEMEKEGRPPENKRSRKPAHPVKR) is disordered. 2 FCS-type zinc fingers span residues 142-180 (DEVS…KCFA) and 216-256 (FKNN…KCLN). Disordered regions lie at residues 304 to 360 (LTDA…ETPS), 413 to 484 (RGPP…PGAP), and 550 to 616 (KPPN…RGRG). Low complexity-rich tracts occupy residues 314 to 335 (PVAA…VSPS) and 417 to 433 (HHAS…MLPG). Pro residues predominate over residues 460-484 (IHPPSTPTMPGNPPGLLPPPPPGAP). 2 stretches are compositionally biased toward low complexity: residues 565–582 (SAPG…GRSL) and 590–603 (GSSK…GSSG). An SUMO interaction motif 1 (SIM); mediates the binding to polysumoylated substrates motif is present at residues 618–622 (VVDLT). Ser-627 is subject to Phosphoserine. The SUMO interaction motif 2 (SIM); mediates the binding to polysumoylated substrates signature appears at 648–652 (VIDLT). A Glycyl lysine isopeptide (Lys-Gly) (interchain with G-Cter in SUMO2) cross-link involves residue Lys-672. Position 694 is a phosphoserine (Ser-694). A disordered region spans residues 725–750 (APAEAKGAEPPPEQPPPPAPPKKLLS). The span at 733–745 (EPPPEQPPPPAPP) shows a compositional bias: pro residues.

Belongs to the SOBP family. Interacts (via SIM domains) with SUMO1 and SUMO2.

Its function is as follows. Implicated in development of the cochlea. This chain is Sine oculis-binding protein homolog, found in Rattus norvegicus (Rat).